The following is a 118-amino-acid chain: MARVTVEDCVDKVPNRFDLVMLAAHRAREIAAGSPLTVDRDNDKNPVVSLREIADETQPVDDLRERMIEAQQTQIEVDEPEEDAMALLLGAEMDRPKPADEESEERMLRMMLEAQGRN.

The protein belongs to the RNA polymerase subunit omega family. As to quaternary structure, the RNAP catalytic core consists of 2 alpha, 1 beta, 1 beta' and 1 omega subunit. When a sigma factor is associated with the core the holoenzyme is formed, which can initiate transcription.

It catalyses the reaction RNA(n) + a ribonucleoside 5'-triphosphate = RNA(n+1) + diphosphate. Its function is as follows. Promotes RNA polymerase assembly. Latches the N- and C-terminal regions of the beta' subunit thereby facilitating its interaction with the beta and alpha subunits. The chain is DNA-directed RNA polymerase subunit omega from Paracoccus denitrificans (strain Pd 1222).